Consider the following 500-residue polypeptide: MNLIYTIILTIIILVLIISIKDLFFEDKIKKINKSIPSPPTIPIFGNLLQINSKDVATCFNDFYKQYGKVYRLRLGSVETVVLTGGDIIDECFNKKYRDFLKARYVKFSRYLGKDTNILHSNGDYHFLLKGVLSSQVTVRKLNNGRLEFNKYILQMFNNLNNNDEGSTMFLANDVPSQIKKLILKVVLNFTLGIEENDDINLSLFQNGSNIFKAAGLFIYSDYLPFLFPLDIKSMAKSNMISSYVFVRDYLAKKLEEVKKKEYIINGDDDGGVDTSQTPLIESYYKLYLQGLIGYDSILLSIVDIIIASVDTTSNSISFIIARLTNHQEIQSKIYEEIMSNDINNNSNNISFSDHSKYPYIISIMNETYRYYASVPLPEPNMTTEDIEVDGYKIAKGTQIYKNIRGTLISKEFWGEDALEFKPERFKTQTLNQKGLLHFGAGPRGCPGARFTECFFFTLMVLLFKNYKLQNPNDNPIDDRGDVGLSMQCKPYDALFIKRN.

Residues isoleucine 4–phenylalanine 24 form a helical membrane-spanning segment. Heme is bound at residue cysteine 446.

This sequence belongs to the cytochrome P450 family. Heme is required as a cofactor.

The protein localises to the membrane. The polypeptide is Probable cytochrome P450 514A2 (cyp514A2) (Dictyostelium discoideum (Social amoeba)).